The primary structure comprises 161 residues: Nucleotide-binding protein Shal_3198 (161 aa).

It belongs to the YajQ family.

In terms of biological role, nucleotide-binding protein. In Shewanella halifaxensis (strain HAW-EB4), this protein is Nucleotide-binding protein Shal_3198.